Here is a 191-residue protein sequence, read N- to C-terminus: Probable DNA-directed RNA polymerase subunit delta (191 aa).

The HTH HARE-type domain maps to 14–83 (LSMIEVARAI…GDNKWGLRSW (70 aa)). Composition is skewed to acidic residues over residues 119 to 133 (EDAIDYNDDDPEDEN) and 143 to 191 (YDND…ETND). The tract at residues 119–191 (EDAIDYNDDD…DDDYEDETND (73 aa)) is disordered.

The protein belongs to the RpoE family. In terms of assembly, RNAP is composed of a core of 2 alpha, a beta and a beta' subunits. The core is associated with a delta subunit and one of several sigma factors.

Functionally, participates in both the initiation and recycling phases of transcription. In the presence of the delta subunit, RNAP displays an increased specificity of transcription, a decreased affinity for nucleic acids, and an increased efficiency of RNA synthesis because of enhanced recycling. This is Probable DNA-directed RNA polymerase subunit delta from Streptococcus thermophilus (strain ATCC BAA-491 / LMD-9).